A 334-amino-acid chain; its full sequence is Kihadalactone A synthase LFS (334 aa).

In terms of domain architecture, Fe2OG dioxygenase spans 181-286; the sequence is KTASYSNMFH…RYSTGLFLCP (106 aa). Fe cation-binding residues include His208, Asp210, and His269. Arg277 serves as a coordination point for 2-oxoglutarate.

The protein belongs to the iron/ascorbate-dependent oxidoreductase family. Fe(2+) is required as a cofactor. Expressed in maturing fruits and in juice vesicles.

It carries out the reaction (1R,2R,3S,8R,10R,11R,15S,16S)-3-(acetyloxy)-15-(1-hydroxy-4-oxobutan-2-yl)-2,7,7,11,16-pentamethyl-5-oxo-6-oxatetracyclo[9.7.0.0(2,8).0(12,16)]octadec-12-en-10-yl acetate + 2-oxoglutarate + O2 = kihadalactone A + succinate + CO2 + 2 H2O. Its pathway is secondary metabolite biosynthesis; terpenoid biosynthesis. Its function is as follows. 2-oxoglutarate-Fe(II) type oxidoreductase involved in the biosynthesis of limonoids triterpene natural products such as limonin, a compound with insecticidal activity responsible for the bitter taste in citrus. Catalyzes the formation of kihadalactone A. This chain is Kihadalactone A synthase LFS, found in Citrus sinensis (Sweet orange).